A 278-amino-acid chain; its full sequence is MFSRLSLFRRAALAPAPMRMSFRTIYQKTEDELPRRIVPKLATFYSANPNHEDRINRLERLLRKYIKLPSQNNNEAQQTKAPWISFDEYALIGGGTKLKPTQYTQLLYMLNKLHNIDPQLTNDEITSELSQYYKKSSMLSNNIKIKTLDEFGRSIAVGKRKSSTAKVFVVRGTGEILVNGRQLNDYFLKMKDRESIMYPLQVIESVGKYNIFATTSGGGPTGQAESIMHAIAKALVVFNPLLKSRLHKAGVLTRDYRHVERKKPGKKKARKMPTWVKR.

A mitochondrion-targeting transit peptide spans 1 to 10 (MFSRLSLFRR). The segment at 259–278 (VERKKPGKKKARKMPTWVKR) is disordered.

It belongs to the universal ribosomal protein uS9 family. As to quaternary structure, component of the mitochondrial small ribosomal subunit (mt-SSU). Mature yeast 74S mitochondrial ribosomes consist of a small (37S) and a large (54S) subunit. The 37S small subunit contains a 15S ribosomal RNA (15S mt-rRNA) and 34 different proteins. The 54S large subunit contains a 21S rRNA (21S mt-rRNA) and 46 different proteins.

It is found in the mitochondrion. Functionally, component of the mitochondrial ribosome (mitoribosome), a dedicated translation machinery responsible for the synthesis of mitochondrial genome-encoded proteins, including at least some of the essential transmembrane subunits of the mitochondrial respiratory chain. The mitoribosomes are attached to the mitochondrial inner membrane and translation products are cotranslationally integrated into the membrane. The polypeptide is Small ribosomal subunit protein uS9m (MRPS9) (Saccharomyces cerevisiae (strain ATCC 204508 / S288c) (Baker's yeast)).